The primary structure comprises 114 residues: Integration host factor subunit alpha (114 aa).

This sequence belongs to the bacterial histone-like protein family. As to quaternary structure, heterodimer of an alpha and a beta chain.

This protein is one of the two subunits of integration host factor, a specific DNA-binding protein that functions in genetic recombination as well as in transcriptional and translational control. The sequence is that of Integration host factor subunit alpha from Afipia carboxidovorans (strain ATCC 49405 / DSM 1227 / KCTC 32145 / OM5) (Oligotropha carboxidovorans).